The sequence spans 276 residues: Large ribosomal subunit protein uL2 (276 aa).

The interval Arg221–Lys276 is disordered. Residues Lys252 to Lys276 show a composition bias toward basic residues.

Belongs to the universal ribosomal protein uL2 family. In terms of assembly, part of the 50S ribosomal subunit. Forms a bridge to the 30S subunit in the 70S ribosome.

In terms of biological role, one of the primary rRNA binding proteins. Required for association of the 30S and 50S subunits to form the 70S ribosome, for tRNA binding and peptide bond formation. It has been suggested to have peptidyltransferase activity; this is somewhat controversial. Makes several contacts with the 16S rRNA in the 70S ribosome. The polypeptide is Large ribosomal subunit protein uL2 (Aster yellows phytoplasma).